The following is a 602-amino-acid chain: RNA-binding NOB1-like protein (602 aa).

The interval methionine 1 to aspartate 25 is disordered. Residues valine 48 to leucine 134 form the PINc domain. Disordered regions lie at residues serine 258 to serine 278 and isoleucine 301 to isoleucine 331. The span at isoleucine 301 to glutamate 329 shows a compositional bias: basic and acidic residues. The stretch at isoleucine 331–glutamate 365 forms a coiled coil. The NOB1 zinc-finger motif lies at isoleucine 452–glycine 522. Positions 462, 465, 477, and 480 each coordinate Zn(2+).

Belongs to the NOB1 family. In terms of assembly, component of the small ribosomal subunit, ribosomal RNA processing complex (SSU RRP complex). In terms of tissue distribution, highly expressed in flowers and siliques and at lower levels in roots, hypocotyls, stems, leaves and seeds.

The protein resides in the nucleus. It is found in the nucleoplasm. The protein localises to the cytoplasm. Its function is as follows. Essential protein required during embryogenesis and pollen development. Endonuclease cleaving pre-rRNA at the 3' end of the mature 18S rRNA (D-site); cleaves 20S pre-rRNA in the cytoplasm. Required for processing of 20S pre-rRNA precursor and biogenesis of 40S ribosomal subunits. The sequence is that of RNA-binding NOB1-like protein from Arabidopsis thaliana (Mouse-ear cress).